Reading from the N-terminus, the 301-residue chain is Prohibitin-2 (301 aa).

Necessary for transcriptional repression stretches follow at residues 19 to 49 (MGTAMKLLLGAGAVAYAVKESVFTVEGGHRA) and 150 to 174 (ASQLITQRAQVSLLIRRELTERAKD). A coiled-coil region spans residues 191-237 (REYTAAVESKQVAQQEAQRAQFLVEKAKQDQKQKIVQAEGEAAAAKM).

Belongs to the prohibitin family. As to quaternary structure, the mitochondrial prohibitin complex consists of two subunits (PHB1 and PHB2), assembled into a membrane-associated ring-shaped supercomplex of approximately 1 mDa.

The protein localises to the mitochondrion inner membrane. Its subcellular location is the cytoplasm. It localises to the nucleus. The protein resides in the cell membrane. In terms of biological role, protein with pleiotropic attributes mediated in a cell-compartment- and tissue-specific manner, which include the plasma membrane-associated cell signaling functions, mitochondrial chaperone, and transcriptional co-regulator of transcription factors and sex steroid hormones in the nucleus. Its function is as follows. In the mitochondria, together with PHB, forms large ring complexes (prohibitin complexes) in the inner mitochondrial membrane (IMM) and functions as a chaperone protein that stabilizes mitochondrial respiratory enzymes and maintains mitochondrial integrity in the IMM, which is required for mitochondrial morphogenesis, neuronal survival, and normal lifespan. In the nucleus, serves as transcriptional co-regulator. This chain is Prohibitin-2 (phb2), found in Xenopus tropicalis (Western clawed frog).